Consider the following 875-residue polypeptide: Phosphatidylinositol 3-kinase VPS34 (875 aa).

Residues 14–188 (LDVPLKVKIK…WLDEITISKL (175 aa)) enclose the C2 PI3K-type domain. Residues 293–526 (LDKQVKPDIK…SSFWSRLDKK (234 aa)) form the PIK helical domain. A PI3K/PI4K catalytic domain is found at 593-859 (CPETSKVFKS…LINDSVNALL (267 aa)). Residues 599–605 (VFKSSLS) are G-loop. The segment at 728–736 (GVGDRHLDN) is catalytic loop. The tract at residues 747 to 768 (HADFGYILGQDPKPFPPLMKLP) is activation loop.

This sequence belongs to the PI3/PI4-kinase family. Component of the autophagy-specific VPS34 PI3-kinase complex I composed of VPS15, VPS30, VPS34, ATG14 and ATG38, and of the VPS34 PI3-kinase complex II composed of VPS15, VPS30, VPS34 and VPS38. Interacts directly with ATG38. Interacts directly with VPS34. Post-translationally, autophosphorylated. Might also be phosphorylated by VPS15.

It is found in the golgi apparatus. The protein localises to the trans-Golgi network membrane. Its subcellular location is the endosome membrane. The catalysed reaction is a 1,2-diacyl-sn-glycero-3-phospho-(1D-myo-inositol) + ATP = a 1,2-diacyl-sn-glycero-3-phospho-(1D-myo-inositol-3-phosphate) + ADP + H(+). Phosphatidylinositol 3-kinase activity is directly dependent on VPS15 protein kinase activity. In terms of biological role, phosphatidylinositol 3-kinase required for cytoplasm to vacuole transport (Cvt) and autophagy as a part of the autophagy-specific VPS34 PI3-kinase complex I. This complex is essential to recruit the ATG8-phosphatidylinositol conjugate and the ATG12-ATG5 conjugate to the pre-autophagosomal structure. Also involved in endosome-to-Golgi retrograde transport as part of the VPS34 PI3-kinase complex II. This second complex is required for the endosome-to-Golgi retrieval of PEP1 and KEX2, and the recruitment of VPS5 and VPS7, two components of the retromer complex, to endosomal membranes (probably through the synthesis of a specific pool of phosphatidylinositol 3-phosphate recruiting the retromer to the endosomes). Its activation by VPS15 may lead to the phosphorylation of phosphatidylinositol in the sorting compartment membrane. Finally, it might also be involved in ethanol tolerance and cell wall integrity. The chain is Phosphatidylinositol 3-kinase VPS34 (VPS34) from Saccharomyces cerevisiae (strain ATCC 204508 / S288c) (Baker's yeast).